A 132-amino-acid chain; its full sequence is UPF0299 membrane protein YohJ (132 aa).

At 1-6 (MSKTLN) the chain is on the periplasmic side. Residues 7 to 27 (IIWQYLRAFVLIYACLYAGIF) form a helical membrane-spanning segment. At 28 to 30 (IAS) the chain is on the cytoplasmic side. A helical membrane pass occupies residues 31–51 (LLPVTIPGSIIGMLILFVLLA). The Periplasmic portion of the chain corresponds to 52–62 (LQILPAKWVNP). A helical transmembrane segment spans residues 63–83 (GCYVLIRYMALLFVPIGVGVM). Topologically, residues 84–92 (QYFDLLRAQ) are cytoplasmic. The helical transmembrane segment at 93-113 (FGPVVVSCAISTLVVFLVVSW) threads the bilayer. The Periplasmic portion of the chain corresponds to 114 to 132 (SSQLVHGERKVVGQKGSEE).

The protein belongs to the UPF0299 family.

The protein resides in the cell inner membrane. The polypeptide is UPF0299 membrane protein YohJ (yohJ) (Escherichia coli O157:H7).